A 175-amino-acid polypeptide reads, in one-letter code: uncharacterized protein (175 aa).

It localises to the cytoplasm. The protein resides in the nucleus. This is an uncharacterized protein from Schizosaccharomyces pombe (strain 972 / ATCC 24843) (Fission yeast).